The chain runs to 462 residues: L-seryl-tRNA(Sec) selenium transferase (462 aa).

K292 is modified (N6-(pyridoxal phosphate)lysine).

This sequence belongs to the SelA family. Pyridoxal 5'-phosphate serves as cofactor.

It localises to the cytoplasm. It carries out the reaction L-seryl-tRNA(Sec) + selenophosphate + H(+) = L-selenocysteinyl-tRNA(Sec) + phosphate. It participates in aminoacyl-tRNA biosynthesis; selenocysteinyl-tRNA(Sec) biosynthesis; selenocysteinyl-tRNA(Sec) from L-seryl-tRNA(Sec) (bacterial route): step 1/1. Functionally, converts seryl-tRNA(Sec) to selenocysteinyl-tRNA(Sec) required for selenoprotein biosynthesis. The polypeptide is L-seryl-tRNA(Sec) selenium transferase (Clostridium perfringens (strain ATCC 13124 / DSM 756 / JCM 1290 / NCIMB 6125 / NCTC 8237 / Type A)).